Reading from the N-terminus, the 692-residue chain is Elongation factor G (692 aa).

The tr-type G domain maps to 9–284 (HKVRNIGIAA…AVVDYLPAPD (276 aa)). Residues 18–25 (AHIDAGKT), 82–86 (DTPGH), and 136–139 (NKMD) contribute to the GTP site.

Belongs to the TRAFAC class translation factor GTPase superfamily. Classic translation factor GTPase family. EF-G/EF-2 subfamily.

It localises to the cytoplasm. Catalyzes the GTP-dependent ribosomal translocation step during translation elongation. During this step, the ribosome changes from the pre-translocational (PRE) to the post-translocational (POST) state as the newly formed A-site-bound peptidyl-tRNA and P-site-bound deacylated tRNA move to the P and E sites, respectively. Catalyzes the coordinated movement of the two tRNA molecules, the mRNA and conformational changes in the ribosome. The protein is Elongation factor G of Campylobacter concisus (strain 13826).